A 705-amino-acid chain; its full sequence is Translation factor GUF1 homolog, mitochondrial (705 aa).

The transit peptide at 1 to 20 (MVCHRYLLGLGASTLCLRRL) directs the protein to the mitochondrion. The segment at 72 to 92 (PVEDNGTTNLTGTGEATSETG) is disordered. The span at 76–90 (NGTTNLTGTGEATSE) shows a compositional bias: polar residues. In terms of domain architecture, tr-type G spans 105 to 288 (NRMRNFCIIA…AVVERIPPPK (184 aa)). GTP is bound by residues 114-121 (AHVDHGKS), 181-185 (DTPGH), and 235-238 (NKID).

The protein belongs to the TRAFAC class translation factor GTPase superfamily. Classic translation factor GTPase family. LepA subfamily.

Its subcellular location is the mitochondrion inner membrane. The enzyme catalyses GTP + H2O = GDP + phosphate + H(+). In terms of biological role, promotes mitochondrial protein synthesis. May act as a fidelity factor of the translation reaction, by catalyzing a one-codon backward translocation of tRNAs on improperly translocated ribosomes. Binds to mitochondrial ribosomes in a GTP-dependent manner. This is Translation factor GUF1 homolog, mitochondrial from Babesia bovis.